The sequence spans 389 residues: Lipid-A-disaccharide synthase (389 aa).

Belongs to the LpxB family.

The catalysed reaction is a lipid X + a UDP-2-N,3-O-bis[(3R)-3-hydroxyacyl]-alpha-D-glucosamine = a lipid A disaccharide + UDP + H(+). The protein operates within bacterial outer membrane biogenesis; LPS lipid A biosynthesis. Condensation of UDP-2,3-diacylglucosamine and 2,3-diacylglucosamine-1-phosphate to form lipid A disaccharide, a precursor of lipid A, a phosphorylated glycolipid that anchors the lipopolysaccharide to the outer membrane of the cell. The sequence is that of Lipid-A-disaccharide synthase from Verminephrobacter eiseniae (strain EF01-2).